Consider the following 638-residue polypeptide: DNA mismatch repair protein MutL (638 aa).

The disordered stretch occupies residues 398-435; sequence GREGTSFGTQTNAFGSMATPRDNSRGSYSAGESRQRTE.

Belongs to the DNA mismatch repair MutL/HexB family.

This protein is involved in the repair of mismatches in DNA. It is required for dam-dependent methyl-directed DNA mismatch repair. May act as a 'molecular matchmaker', a protein that promotes the formation of a stable complex between two or more DNA-binding proteins in an ATP-dependent manner without itself being part of a final effector complex. In Shewanella baltica (strain OS155 / ATCC BAA-1091), this protein is DNA mismatch repair protein MutL.